The sequence spans 983 residues: UPF0746 protein DDB_G0280809 (983 aa).

The span at 1-21 (MISNKRKEIDTINEHHEKNND) shows a compositional bias: basic and acidic residues. The segment at 1–26 (MISNKRKEIDTINEHHEKNNDDSDGI) is disordered. One can recognise an SAP domain in the interval 42 to 76 (SGSTNYRELQIIAKSLGLASNGKKQLVYNRIEGYF). Positions 391 to 413 (HTTPTSTSTSTSTSTSTYTSTST) are disordered. The span at 392-413 (TTPTSTSTSTSTSTSTYTSTST) shows a compositional bias: low complexity.

The protein belongs to the UPF0746 family.

The chain is UPF0746 protein DDB_G0280809 from Dictyostelium discoideum (Social amoeba).